We begin with the raw amino-acid sequence, 368 residues long: Proline-rich protein 5-like (368 aa).

S28 is modified (phosphoserine). Residues L312 to S368 are disordered. Residues A353–S368 show a composition bias toward polar residues.

The protein belongs to the PROTOR family. In terms of assembly, interacts with the mammalian target of rapamycin complex 2 (mTORC2) which contains MTOR, MLST8, PRR5, RICTOR, MAPKAP1 and DEPTOR. Interacts with RFFL. Interacts (via C-terminus) with ZFP36 (via C-terminus); this interaction may accelerate ZFP36-mediated mRNA decay during stress. Interacts with RICTOR. Post-translationally, ubiquitinated. Ubiquitination by RFFL promotes proteasomal degradation of PRR5L thereby modifying the substrate-specific activity of the mTORC2 complex. Ubiquitination by RFFL is stimulated by LPA/lysophosphatidic acid.

In terms of biological role, associates with the mTORC2 complex that regulates cellular processes including survival and organization of the cytoskeleton. Regulates the activity of the mTORC2 complex in a substrate-specific manner preventing for instance the specific phosphorylation of PKCs and thereby controlling cell migration. Plays a role in the stimulation of ZFP36-mediated mRNA decay of several ZFP36-associated mRNAs, such as TNF-alpha and GM-CSF, in response to stress. Required for ZFP36 localization to cytoplasmic stress granule (SG) and P-body (PB) in response to stress. This is Proline-rich protein 5-like (PRR5L) from Bos taurus (Bovine).